The following is a 565-amino-acid chain: MSRSLSECIDQGRGLVPADLVLKHGRVFDLVTGELVQTDVAICGDRIVGTFGTYTGRREIDCRGRILVPGFIDTHLHVESSLVTPFEFDRCVTPRGITTAICDPHEIANVCGLEGIRYFLEASAHLVMDLRVQLSSCVPSTHMETAGAALEAKDLAPLMDHPRVIGLAEFMNFPGVLMKDPGCMAKLEAFRGRHIDGHAPLLRGKDLNGYIAAGIRTEHEATTAEEALEKLRKGMRVLIREGSVSKDLHALVSILTERHAPYLCLCTDDRNPLDIAEHGHIDHMIRTAIRLGAPPLAVYRAASLSAADAFGLKDRGLIAPGRRADIAVLDSLEGCHAALVLAGGVVADDAAFSARSDIEPVARASVKVAEIAPEAFRCPGNRADTPVIGILPGKIITEHLTAEIEPVDGDKRPDPVRDLARIAVIERHGKTGGRATGFVRGFGMARGAIASTVCHDHHNLAVVGIDYADMALAANRLRALEGGFAVAAGGEILAELALPVGGLMSLRPFEEVRDALVTLREAARSLGVTLEEPFLQLAFLALPVIPHLKITDRGMVDVDRFEILP.

Belongs to the metallo-dependent hydrolases superfamily. Adenine deaminase family. Requires Mn(2+) as cofactor.

It catalyses the reaction adenine + H2O + H(+) = hypoxanthine + NH4(+). The protein is Adenine deaminase of Cereibacter sphaeroides (strain ATCC 17023 / DSM 158 / JCM 6121 / CCUG 31486 / LMG 2827 / NBRC 12203 / NCIMB 8253 / ATH 2.4.1.) (Rhodobacter sphaeroides).